Here is a 199-residue protein sequence, read N- to C-terminus: Tegument protein UL14 homolog (199 aa).

Over residues 176-191 (TDMNQMQPQPISKNEN) the composition is skewed to polar residues. Positions 176–199 (TDMNQMQPQPISKNENPPTPHTDV) are disordered.

It belongs to the alphaherpesvirinae HHV-1 UL14 protein family.

It is found in the virion tegument. The protein localises to the host cytoplasm. It localises to the host nucleus. In terms of biological role, contributes to the nuclear transport of the viral transcriptional activator VP16 homolog during the early phase of infection. Therefore, participates indirectly in the regulation of the immediate-early gene expression. Additionally, seems to be important for efficient nuclear targeting of capsids. The sequence is that of Tegument protein UL14 homolog from Varicella-zoster virus (strain Dumas) (HHV-3).